The chain runs to 427 residues: MTEAMKITLSTQPADARWGEKATYSINNDGITLHLNGADDLGLIQRAARKIDGLGIKHVQLSGEGWDADRCWAFWQGYKAPKGIRKVEWPDLDDAQRQELDNRLMIIDWVRDTINAPAEELGPSQLAQRAVDLISNVAGDRVTYRITKGEDLREQGYMGLHTVGRGSERSPVLLALDYNPTGDKEAPVYACLVGKGITFDSGGYSIKQTAFMDSMKSDMGGAATVTGALAFAITRGLNKRVKLFLCCADNLISGNAFKLGDIITYRNGKKVEVMNTDAEGRLVLADGLIDASAQKPELIIDAATLTGAAKTALGNDYHALFSFDDALAGRLLASAAQENEPFWRLPLAEFHRNQLPSNFAELNNTGSAAYPAGASTAAGFLSHFVENYQQGWLHIDCSATYRKAPVEQWSAGATGLGVRTIANLLTA.

Positions 195 and 200 each coordinate Mn(2+). Lysine 207 is an active-site residue. Aspartate 218, aspartate 277, and glutamate 279 together coordinate Mn(2+). Residue arginine 281 is part of the active site.

This sequence belongs to the peptidase M17 family. In terms of assembly, homohexamer. Mn(2+) serves as cofactor.

It localises to the cytoplasm. The enzyme catalyses Release of an N-terminal amino acid, Xaa, from a peptide or arylamide. Xaa is preferably Glu or Asp but may be other amino acids, including Leu, Met, His, Cys and Gln.. Functionally, probably plays an important role in intracellular peptide degradation. In Escherichia coli (strain UTI89 / UPEC), this protein is Peptidase B.